Reading from the N-terminus, the 505-residue chain is Tyrosine-protein kinase FRK (505 aa).

Phosphoserine occurs at positions 37 and 40. Residues 42-110 (RHGHYFVALF…PSNYVAEDRS (69 aa)) form the SH3 domain. The region spanning 116-208 (WFFGAIGRSD…GLCVKLGKPC (93 aa)) is the SH2 domain. Thr-178 is subject to Phosphothreonine. The Protein kinase domain occupies 234-491 (IQLLKRLGSG…TLRWKLEDYF (258 aa)). ATP contacts are provided by residues 240-248 (LGSGQFGEV) and Lys-262. Asp-354 serves as the catalytic Proton acceptor. Tyr-387 bears the Phosphotyrosine; by autocatalysis mark.

This sequence belongs to the protein kinase superfamily. Tyr protein kinase family. SRC subfamily. In terms of assembly, interacts (via the SH3-domain) with PTEN. Interacts with RB1. In terms of tissue distribution, predominantly expressed in epithelial derived cell lines and tissues, especially normal liver, kidney, breast and colon.

It localises to the cytoplasm. The protein localises to the nucleus. The enzyme catalyses L-tyrosyl-[protein] + ATP = O-phospho-L-tyrosyl-[protein] + ADP + H(+). Its function is as follows. Non-receptor tyrosine-protein kinase that negatively regulates cell proliferation. Positively regulates PTEN protein stability through phosphorylation of PTEN on 'Tyr-336', which in turn prevents its ubiquitination and degradation, possibly by reducing its binding to NEDD4. May function as a tumor suppressor. The polypeptide is Tyrosine-protein kinase FRK (FRK) (Homo sapiens (Human)).